The following is a 131-amino-acid chain: Calvin cycle protein CP12-2, chloroplastic (131 aa).

Residues 1–53 constitute a chloroplast transit peptide; the sequence is MATIATGLNIATQRVFVTSENRPVCLAGPVHLNNSWNLGSRTTNRMMKLQPIK. 2 disulfides stabilise this stretch: Cys75-Cys84 and Cys117-Cys126. The tract at residues 97 to 131 is disordered; it reads AASHARDKKKADGSDPLEEYCKDNPETNECRTYDN. Residues 105–131 are compositionally biased toward basic and acidic residues; sequence KKADGSDPLEEYCKDNPETNECRTYDN.

Belongs to the CP12 family. In terms of assembly, monomer. Component of a complex that contains two dimers of PRK, two tetramers of GAPDH and CP12. CP12 associates with GAPDH, causing its conformation to change. This GAPDH/CP12 complex binds PRK to form a half-complex (one unit). This unit probably dimerizes due partially to interactions between the enzymes of each unit. In terms of processing, contains two disulfide bonds; only the oxidized protein, with two disulfide bonds, is active in complex formation. The C-terminal disulfide is involved in the interaction with GAPDH and the N-terminal disulfide mediates the binding of PRK with this binary complex. As to expression, mostly expressed in cotyledons, leaves and flower stalks, and, to a lower extent, in flowers and stems. Barely detectable in roots and siliques.

It localises to the plastid. It is found in the chloroplast. Acts as a linker essential in the assembly of a core complex of PRK/GAPDH. Coordinates the reversible inactivation of chloroplast enzymes GAPDH and PRK during darkness in photosynthetic tissues. The chain is Calvin cycle protein CP12-2, chloroplastic (CP12-2) from Arabidopsis thaliana (Mouse-ear cress).